The following is a 212-amino-acid chain: Glycerol-3-phosphate acyltransferase (212 aa).

The next 5 membrane-spanning stretches (helical) occupy residues 3 to 23, 51 to 71, 78 to 98, 115 to 135, and 139 to 159; these read ILLA…VIVS, KAAI…VWLA, DVAI…PVFF, AVHP…AFFF, and SLAA…LFGT.

Belongs to the PlsY family. As to quaternary structure, probably interacts with PlsX.

It localises to the cell inner membrane. The catalysed reaction is an acyl phosphate + sn-glycerol 3-phosphate = a 1-acyl-sn-glycero-3-phosphate + phosphate. It participates in lipid metabolism; phospholipid metabolism. Its function is as follows. Catalyzes the transfer of an acyl group from acyl-phosphate (acyl-PO(4)) to glycerol-3-phosphate (G3P) to form lysophosphatidic acid (LPA). This enzyme utilizes acyl-phosphate as fatty acyl donor, but not acyl-CoA or acyl-ACP. This Burkholderia multivorans (strain ATCC 17616 / 249) protein is Glycerol-3-phosphate acyltransferase.